Consider the following 117-residue polypeptide: Large ribosomal subunit protein uL18 (117 aa).

The protein belongs to the universal ribosomal protein uL18 family. In terms of assembly, part of the 50S ribosomal subunit; part of the 5S rRNA/L5/L18/L25 subcomplex. Contacts the 5S and 23S rRNAs.

Its function is as follows. This is one of the proteins that bind and probably mediate the attachment of the 5S RNA into the large ribosomal subunit, where it forms part of the central protuberance. This chain is Large ribosomal subunit protein uL18, found in Aeromonas salmonicida (strain A449).